Here is a 73-residue protein sequence, read N- to C-terminus: Beta-defensin 10 (73 aa).

The first 23 residues, 1-23 (MRTLCSLLLICCLLFSYTTPAVG), serve as a signal peptide directing secretion. Disulfide bonds link C37–C66, C44–C59, and C49–C67.

Belongs to the beta-defensin family. As to expression, expressed in both adult and neonate brain, and very weakly in kidneys, epididymis, and testis.

The protein resides in the secreted. Has antibacterial activity. This is Beta-defensin 10 (Defb10) from Mus musculus (Mouse).